The sequence spans 105 residues: Pyrimidine/purine nucleoside phosphorylase (105 aa).

This sequence belongs to the nucleoside phosphorylase PpnP family.

It carries out the reaction a purine D-ribonucleoside + phosphate = a purine nucleobase + alpha-D-ribose 1-phosphate. The catalysed reaction is adenosine + phosphate = alpha-D-ribose 1-phosphate + adenine. It catalyses the reaction cytidine + phosphate = cytosine + alpha-D-ribose 1-phosphate. The enzyme catalyses guanosine + phosphate = alpha-D-ribose 1-phosphate + guanine. It carries out the reaction inosine + phosphate = alpha-D-ribose 1-phosphate + hypoxanthine. The catalysed reaction is thymidine + phosphate = 2-deoxy-alpha-D-ribose 1-phosphate + thymine. It catalyses the reaction uridine + phosphate = alpha-D-ribose 1-phosphate + uracil. The enzyme catalyses xanthosine + phosphate = alpha-D-ribose 1-phosphate + xanthine. Its function is as follows. Catalyzes the phosphorolysis of diverse nucleosides, yielding D-ribose 1-phosphate and the respective free bases. Can use uridine, adenosine, guanosine, cytidine, thymidine, inosine and xanthosine as substrates. Also catalyzes the reverse reactions. The sequence is that of Pyrimidine/purine nucleoside phosphorylase from Wolinella succinogenes (strain ATCC 29543 / DSM 1740 / CCUG 13145 / JCM 31913 / LMG 7466 / NCTC 11488 / FDC 602W) (Vibrio succinogenes).